Reading from the N-terminus, the 261-residue chain is DNA repair protein RecO (261 aa).

This sequence belongs to the RecO family.

Functionally, involved in DNA repair and RecF pathway recombination. In Gloeobacter violaceus (strain ATCC 29082 / PCC 7421), this protein is DNA repair protein RecO.